The following is a 235-amino-acid chain: 7-cyano-7-deazaguanine synthase (235 aa).

Residue 12–22 (FSGGQDSTACL) participates in ATP binding. Residues Cys200, Cys215, Cys218, and Cys221 each contribute to the Zn(2+) site.

The protein belongs to the QueC family. Zn(2+) is required as a cofactor.

It catalyses the reaction 7-carboxy-7-deazaguanine + NH4(+) + ATP = 7-cyano-7-deazaguanine + ADP + phosphate + H2O + H(+). It participates in purine metabolism; 7-cyano-7-deazaguanine biosynthesis. Catalyzes the ATP-dependent conversion of 7-carboxy-7-deazaguanine (CDG) to 7-cyano-7-deazaguanine (preQ(0)). This is 7-cyano-7-deazaguanine synthase from Methylibium petroleiphilum (strain ATCC BAA-1232 / LMG 22953 / PM1).